A 369-amino-acid chain; its full sequence is Chaperone protein DnaJ (369 aa).

In terms of domain architecture, J spans 7-73 (DYYEILGVPR…QKRAMYDRFG (67 aa)). The CR-type zinc-finger motif lies at 143-225 (GAEIPVEYER…CGGSGRVLRK (83 aa)). Residues Cys-156, Cys-159, Cys-173, Cys-176, Cys-199, Cys-202, Cys-213, and Cys-216 each contribute to the Zn(2+) site. CXXCXGXG motif repeat units lie at residues 156 to 163 (CPRCGGTG), 173 to 180 (CPSCGGTG), 199 to 206 (CERCGGTG), and 213 to 220 (CHECGGSG).

It belongs to the DnaJ family. As to quaternary structure, homodimer. The cofactor is Zn(2+).

It localises to the cytoplasm. Functionally, participates actively in the response to hyperosmotic and heat shock by preventing the aggregation of stress-denatured proteins and by disaggregating proteins, also in an autonomous, DnaK-independent fashion. Unfolded proteins bind initially to DnaJ; upon interaction with the DnaJ-bound protein, DnaK hydrolyzes its bound ATP, resulting in the formation of a stable complex. GrpE releases ADP from DnaK; ATP binding to DnaK triggers the release of the substrate protein, thus completing the reaction cycle. Several rounds of ATP-dependent interactions between DnaJ, DnaK and GrpE are required for fully efficient folding. Also involved, together with DnaK and GrpE, in the DNA replication of plasmids through activation of initiation proteins. This is Chaperone protein DnaJ from Thermotoga sp. (strain RQ2).